Consider the following 144-residue polypeptide: Protein BUD31 homolog (144 aa).

The short motif at 2–10 (PKVRRSRKP) is the Nuclear localization signal element.

It belongs to the BUD31 (G10) family.

The protein resides in the nucleus. The chain is Protein BUD31 homolog from Branchiostoma belcheri (Amphioxus).